The chain runs to 597 residues: Arginine--tRNA ligase (597 aa).

The 'HIGH' region signature appears at Pro-125 to His-135.

This sequence belongs to the class-I aminoacyl-tRNA synthetase family. As to quaternary structure, monomer.

It is found in the cytoplasm. The catalysed reaction is tRNA(Arg) + L-arginine + ATP = L-arginyl-tRNA(Arg) + AMP + diphosphate. The sequence is that of Arginine--tRNA ligase from Parabacteroides distasonis (strain ATCC 8503 / DSM 20701 / CIP 104284 / JCM 5825 / NCTC 11152).